We begin with the raw amino-acid sequence, 134 residues long: Fatty acid-binding protein, muscle (134 aa).

(9Z)-octadecenoate-binding positions include arginine 109 and 129 to 131 (RIY).

Belongs to the calycin superfamily. Fatty-acid binding protein (FABP) family. As to quaternary structure, monomer. Adult flight muscle.

Its subcellular location is the cytoplasm. Binds fatty acids in a 1:1 molar ratio. The chain is Fatty acid-binding protein, muscle from Schistocerca gregaria (Desert locust).